The primary structure comprises 154 residues: Egg-lysin (154 aa).

The signal sequence occupies residues 1-18 (MKLLVLCIFAMMATLAMS).

As to quaternary structure, homodimer. Sperm.

In terms of biological role, dissolves the egg vitelline layer nonenzymatically during fertilization. It creates a hole of about 3 mu-m in diameter through which the sperm pass. This chain is Egg-lysin, found in Haliotis sorenseni (White abalone).